The sequence spans 439 residues: Branched-chain amino acid permease BrnQ (439 aa).

Residues 1 to 9 (MTHQLRSRD) are Cytoplasmic-facing. Residues 10 to 30 (IIALGFMTFALFVGAGNIIFP) form a helical membrane-spanning segment. Over 31–45 (PMVGLQAGEHVWTAA) the chain is Periplasmic. A helical membrane pass occupies residues 46 to 66 (FGFLITAVGLPVLTVVALAKV). Topologically, residues 67 to 79 (GGGVDSLSTPIGK) are cytoplasmic. A helical membrane pass occupies residues 80–100 (VAGVLLATVCYLAVGPLFATP). Topologically, residues 101-118 (RTATVSFEVGIAPLTGDS) are periplasmic. The helical transmembrane segment at 119 to 139 (ALPLFIYSLVYFAIVILVSLY) threads the bilayer. At 140–149 (PGKLLDTVGN) the chain is on the cytoplasmic side. Residues 150–170 (FLAPLKIIALVILSVAAIVWP) traverse the membrane as a helical segment. The Periplasmic segment spans residues 171–189 (AGSISTATEAYQNAAFSNG). Residues 190 to 210 (FVNGYLTMDTLGAMVFGIVIV) form a helical membrane-spanning segment. Topologically, residues 211-226 (NAARSRGVTEARLLTR) are cytoplasmic. Residues 227 to 247 (YTVWAGLMAGVGLTLLYLALF) traverse the membrane as a helical segment. Over 248 to 277 (RLGSDSASLVDQSANGAAILHAYVQHTFGG) the chain is Periplasmic. A helical transmembrane segment spans residues 278 to 298 (GGSFLLAALIFIACLVTAVGL). Over 299–316 (TCACAEFFAQYVPLSYRT) the chain is Cytoplasmic. The chain crosses the membrane as a helical span at residues 317 to 337 (LVFILGGFSMVVSNLGLSQLI). Position 338 (Q338) is a topological domain, periplasmic. The chain crosses the membrane as a helical span at residues 339-359 (ISVPVLTAIYPPCIALVVLSF). Over 360-369 (TRSWWHNSSR) the chain is Cytoplasmic. A helical membrane pass occupies residues 370–390 (VIAPPMFISLLFGILDGIKAS). Residues 391–404 (AFSDILPSWAQRLP) are Periplasmic-facing. Residues 405–425 (LAEQGLAWLMPTVVMVVLAII) form a helical membrane-spanning segment. The Cytoplasmic segment spans residues 426–439 (WDRAAGRQVTSSAH).

The protein belongs to the branched chain amino acid transporter family.

Its subcellular location is the cell inner membrane. Functionally, liv-II branched chain amino acid transport system, which transports leucine, valine and isoleucine. In Escherichia coli O157:H7, this protein is Branched-chain amino acid permease BrnQ (brnQ).